The sequence spans 227 residues: Deoxyribose-phosphate aldolase (227 aa).

Catalysis depends on Asp84, which acts as the Proton donor/acceptor. Catalysis depends on Lys146, which acts as the Schiff-base intermediate with acetaldehyde. Catalysis depends on Lys188, which acts as the Proton donor/acceptor.

Belongs to the DeoC/FbaB aldolase family. DeoC type 1 subfamily.

It is found in the cytoplasm. It catalyses the reaction 2-deoxy-D-ribose 5-phosphate = D-glyceraldehyde 3-phosphate + acetaldehyde. It functions in the pathway carbohydrate degradation; 2-deoxy-D-ribose 1-phosphate degradation; D-glyceraldehyde 3-phosphate and acetaldehyde from 2-deoxy-alpha-D-ribose 1-phosphate: step 2/2. Functionally, catalyzes a reversible aldol reaction between acetaldehyde and D-glyceraldehyde 3-phosphate to generate 2-deoxy-D-ribose 5-phosphate. The chain is Deoxyribose-phosphate aldolase from Pyrobaculum islandicum (strain DSM 4184 / JCM 9189 / GEO3).